A 261-amino-acid chain; its full sequence is MYTDLKDKVVVITGGSTGLGRAMAVRFGQEEAKVVINYYNNEEEALDAKKEVEEAGGQAIIVQGDVTKEEDVVNLVQTAIKEFGTLDVMINNAGVENPVPSHELSLDNWNKVIDTNLTGAFLGSREAIKYFVENDIKGNVINMSSVHEMIPWPLFVHYAASKGGMKLMTETLALEYAPKGIRVNNIGPGAMNTPINAEKFADPVQRADVESMIPMGYIGKPEEVAAVAAFLASSQASYVTGITLFADGGMTKYPSFQAGRG.

NAD(+) is bound at residue 11-35 (VITGGSTGLGRAMAVRFGQEEAKVV). Serine 145 provides a ligand contact to substrate. Tyrosine 158 functions as the Proton acceptor in the catalytic mechanism.

Belongs to the short-chain dehydrogenases/reductases (SDR) family. In terms of assembly, homotetramer.

The catalysed reaction is D-glucose + NAD(+) = D-glucono-1,5-lactone + NADH + H(+). The enzyme catalyses D-glucose + NADP(+) = D-glucono-1,5-lactone + NADPH + H(+). This is Glucose 1-dehydrogenase 4 (gdhIV) from Priestia megaterium (Bacillus megaterium).